A 130-amino-acid polypeptide reads, in one-letter code: Small ribosomal subunit protein eS8 (130 aa).

Belongs to the eukaryotic ribosomal protein eS8 family. In terms of assembly, part of the 30S ribosomal subunit.

In Thermococcus gammatolerans (strain DSM 15229 / JCM 11827 / EJ3), this protein is Small ribosomal subunit protein eS8.